A 422-amino-acid chain; its full sequence is Serine--tRNA ligase (422 aa).

238-240 (TSE) lines the L-serine pocket. 269 to 271 (RKE) serves as a coordination point for ATP. Glutamate 292 contributes to the L-serine binding site. ATP is bound at residue 356 to 359 (EISS). Serine 390 lines the L-serine pocket.

This sequence belongs to the class-II aminoacyl-tRNA synthetase family. Type-1 seryl-tRNA synthetase subfamily. As to quaternary structure, homodimer. The tRNA molecule binds across the dimer.

It is found in the cytoplasm. It carries out the reaction tRNA(Ser) + L-serine + ATP = L-seryl-tRNA(Ser) + AMP + diphosphate + H(+). The catalysed reaction is tRNA(Sec) + L-serine + ATP = L-seryl-tRNA(Sec) + AMP + diphosphate + H(+). It functions in the pathway aminoacyl-tRNA biosynthesis; selenocysteinyl-tRNA(Sec) biosynthesis; L-seryl-tRNA(Sec) from L-serine and tRNA(Sec): step 1/1. Its function is as follows. Catalyzes the attachment of serine to tRNA(Ser). Is also able to aminoacylate tRNA(Sec) with serine, to form the misacylated tRNA L-seryl-tRNA(Sec), which will be further converted into selenocysteinyl-tRNA(Sec). The protein is Serine--tRNA ligase of Helicobacter hepaticus (strain ATCC 51449 / 3B1).